Reading from the N-terminus, the 214-residue chain is Octanoyltransferase (214 aa).

Residues 32-207 enclose the BPL/LPL catalytic domain; that stretch reads EDTLDEIWLV…NLLALLNHPP (176 aa). Residues 71-78, 138-140, and 151-153 contribute to the substrate site; these read RGGQVTYH, SLG, and GLA. Catalysis depends on Cys169, which acts as the Acyl-thioester intermediate.

The protein belongs to the LipB family.

It localises to the cytoplasm. The catalysed reaction is octanoyl-[ACP] + L-lysyl-[protein] = N(6)-octanoyl-L-lysyl-[protein] + holo-[ACP] + H(+). It participates in protein modification; protein lipoylation via endogenous pathway; protein N(6)-(lipoyl)lysine from octanoyl-[acyl-carrier-protein]: step 1/2. Its function is as follows. Catalyzes the transfer of endogenously produced octanoic acid from octanoyl-acyl-carrier-protein onto the lipoyl domains of lipoate-dependent enzymes. Lipoyl-ACP can also act as a substrate although octanoyl-ACP is likely to be the physiological substrate. The chain is Octanoyltransferase from Klebsiella pneumoniae subsp. pneumoniae (strain ATCC 700721 / MGH 78578).